The sequence spans 342 residues: Mitochondrial fission factor (342 aa).

The Cytoplasmic portion of the chain corresponds to 1–322 (MSKGTSSDTS…ENKERAKREM (322 aa)). Threonine 115 carries the phosphothreonine modification. Alanine 146 is modified (phosphoserine). Arginine 149 bears the Phosphothreonine mark. Residues lysine 151, serine 155, serine 157, and serine 172 each carry the phosphoserine modification. Threonine 200 carries the post-translational modification Phosphothreonine. Serine 202, serine 229, serine 233, and serine 295 each carry phosphoserine. A coiled-coil region spans residues 291 to 322 (VDAASLRRQIIKLNRRLQLLEEENKERAKREM). The helical; Anchor for type IV membrane protein transmembrane segment at 323–340 (VMYSITVAFWLLNSWLWF) threads the bilayer. Topologically, residues 341 to 342 (RR) are mitochondrial intermembrane.

This sequence belongs to the Tango11 family. As to quaternary structure, homodimer. Interacts with DNM1L. Interacts with C11orf65/MFI; the interaction inhibits MFF interaction with DNM1L. In terms of tissue distribution, highly expressed in heart, kidney, liver, brain, muscle, and stomach.

It localises to the mitochondrion outer membrane. The protein resides in the peroxisome. It is found in the cytoplasmic vesicle. The protein localises to the secretory vesicle. Its subcellular location is the synaptic vesicle. Functionally, plays a role in mitochondrial and peroxisomal fission. Promotes the recruitment and association of the fission mediator dynamin-related protein 1 (DNM1L) to the mitochondrial surface. May be involved in regulation of synaptic vesicle membrane dynamics by recruitment of DNM1L to clathrin-containing vesicles. This is Mitochondrial fission factor (MFF) from Homo sapiens (Human).